Reading from the N-terminus, the 1057-residue chain is Hemophilin receptor (1057 aa).

A TBDR plug domain is found at 168 to 285 (KVYDANRSSV…VGGAVVVKTL (118 aa)). The TBDR beta-barrel domain occupies 296-1057 (SFGAELKVEG…TMKISWTTKF (762 aa)).

Belongs to the TonB-dependent receptor family.

Its subcellular location is the cell outer membrane. Functionally, part of a high affinity heme acquisition system. Functions as a gateway for heme entry into the bacterial cell, enabling growth on hemoprotein sources. Can acquire heme directly from hemoprotein reservoirs, however, HphA likely enhances the efficiency of this process by delivering heme to HphR. Is essential for virulence, bacterial dissemination and growth in the blood. This chain is Hemophilin receptor, found in Acinetobacter baumannii.